A 1218-amino-acid polypeptide reads, in one-letter code: Formin-A (1218 aa).

The C2 domain occupies 1 to 108; it reads MADKLYQIKL…ILGEACNYSV (108 aa). In terms of domain architecture, GBD/FH3 spans 139–539; sequence EEKKRHDEIQ…QISLRDKNIG (401 aa). Residues 563–638 adopt a coiled-coil conformation; that stretch reads LKSQIESLKK…QLKLTQGTAK (76 aa). Residues 634–762 form a disordered region; sequence QGTAKPDSAA…KAAAPPRKEV (129 aa). Over residues 649–747 the composition is skewed to pro residues; the sequence is APPPPPPPMT…FGKGPPPPPG (99 aa). The region spanning 652–737 is the FH1 domain; the sequence is PPPPPMTGGG…AGGPPPPPPP (86 aa). The FH2 domain occupies 759-1155; sequence RKEVPVPALK…IAKREAAKKL (397 aa). Positions 1034-1061 form a coiled coil; it reads SLSQVQAEVATLRKEFVQVQKSIETLNS. Disordered regions lie at residues 1153-1179 and 1198-1218; these read KKLKEEEDAKKKQLAEERKQKGETVEV and KNRRRRARKTDQDSTIEPIDL. The DAD domain occupies 1174–1209; sequence GETVEVKESVVDDLLDTIASGDAFKNRRRRARKTDQ.

It belongs to the formin homology family. Diaphanous subfamily. As to quaternary structure, interacts (via GBD/FH3 domain) with activated Rho-GTPases.

In terms of biological role, formins play an important role in the nucleation of actin and the formation of linear actin filaments. The chain is Formin-A (forA) from Dictyostelium discoideum (Social amoeba).